Consider the following 273-residue polypeptide: Homeobox protein ceh-43 (273 aa).

Disordered regions lie at residues 47–79 (NGAT…EEAF) and 153–204 (RRSK…LVSS). Residues 102-161 (MRKPRTIYNSSQLQMLQKKFQKTQYLALPDRAALAHELGLSQTQVKIWFQNRRSKQKKQK) constitute a DNA-binding region (homeobox).

Belongs to the distal-less homeobox family. In terms of tissue distribution, predominantly expressed in the head hypdodermis, neuronal support cells and CAN neurons.

It is found in the nucleus. In terms of biological role, probable transcription factor. Binds to the sequence motif 5'-ATAAT-3' in regulatory elements. Required for development of the anterior hypodermis during embryonic morphogenesis for cell adhesion; also affects embryonic and larval viability. Modulates and maintains dopaminergic neuron differentiation. May activate dopamine pathway genes in concert with ETS domain-containing protein ast-1, and homeobox proteins ceh-40 and ceh-20. This chain is Homeobox protein ceh-43 (ceh-43), found in Caenorhabditis elegans.